Consider the following 1608-residue polypeptide: Hemolysin (1608 aa).

Residues 1 to 30 form the signal peptide; sequence MKNNNFRLSAAGKLAAALAIILAASAGAYA. Disordered regions lie at residues 296–315, 452–488, 716–737, 971–1030, 1168–1199, and 1437–1469; these read SRVDDASSNKNGGDNYQNYR, KSSERGYQRNHTSSLRTGRWSNSDESESLKASELRSE, EHTRDSEKTTRTENSASSLSGG, AVNL…SASQ, AESTQTRKESKLSGNIDLGAGSSDSKEKTGGN, and PQQDTTGAVSFSKAEGKVTLPATPAGEKPQGPL. Polar residues-rich tracts occupy residues 303–313 and 460–474; these read SNKNGGDNYQN and RNHTSSLRTGRWSNS. Composition is skewed to basic and acidic residues over residues 478-488 and 716-726; these read ESLKASELRSE and EHTRDSEKTTR. The span at 727–736 shows a compositional bias: polar residues; sequence TENSASSLSG. Residues 977–996 are compositionally biased toward basic and acidic residues; it reads DSHRSEAAANRQDEQSRDTR. Positions 1021–1030 are enriched in polar residues; the sequence is TQRSNSSASQ.

It is found in the cell outer membrane. Functionally, bacterial hemolysins are exotoxins that attack blood cell membranes and cause cell rupture by mechanisms not clearly defined. Its function is as follows. Cell-bound hemolysin, which releases heme-iron from erythrocytes by interaction with the erythrocyte membrane. ShlA requires ShlB function. This is Hemolysin (shlA) from Serratia marcescens.